The primary structure comprises 322 residues: Cytochrome c biogenesis protein CcsA (322 aa).

Transmembrane regions (helical) follow at residues 15-35 (FSIVSIIITMRLISFFLVDGI), 45-65 (GMIVTFLCLTGLLVTRWTYSG), 72-92 (LYESLIFLSWSFSLIHIVPYF), 98-120 (YLSTITGSSVVFTQGFTTSGLLT), 144-164 (MILGYASLLCGSLLSIALLVI), 226-246 (GISLGFIFLTIGILSGAVWAN), 253-273 (WNWDPKETWAFITWIIFAIYL), and 287-307 (AIVASIGFLIIWICYFGVNLL).

Belongs to the CcmF/CycK/Ccl1/NrfE/CcsA family. In terms of assembly, may interact with Ccs1.

It localises to the plastid. The protein localises to the chloroplast thylakoid membrane. In terms of biological role, required during biogenesis of c-type cytochromes (cytochrome c6 and cytochrome f) at the step of heme attachment. The polypeptide is Cytochrome c biogenesis protein CcsA (Coffea arabica (Arabian coffee)).